A 430-amino-acid chain; its full sequence is CinA-like protein (430 aa).

This sequence belongs to the CinA family.

This Mycobacterium tuberculosis (strain ATCC 25177 / H37Ra) protein is CinA-like protein.